The sequence spans 177 residues: Adenine phosphoribosyltransferase (177 aa).

The protein belongs to the purine/pyrimidine phosphoribosyltransferase family. Homodimer.

Its subcellular location is the cytoplasm. It catalyses the reaction AMP + diphosphate = 5-phospho-alpha-D-ribose 1-diphosphate + adenine. It functions in the pathway purine metabolism; AMP biosynthesis via salvage pathway; AMP from adenine: step 1/1. Functionally, catalyzes a salvage reaction resulting in the formation of AMP, that is energically less costly than de novo synthesis. The chain is Adenine phosphoribosyltransferase from Pelodictyon phaeoclathratiforme (strain DSM 5477 / BU-1).